The sequence spans 605 residues: MADPKGSTSKDGLDDWCIVEAECSDIENDLEELFDRDTDSDISELLDDNDDLDQGNSRELFHQQESKESEEHLQKLKRKYLSPQAIAQLSPRLESITLSPQQKSKRRLFAEQDSGLELTLTNEAEDVSSEVEVPALDSQPVAEAQIGTVDIHYTELLRASNNKAILMAKFKEAFGVGFNDLTRQFKSYKTCCNHWVLSVYAVHDDLLESSKKLLQQHCDYVWIRGIAAMSLFLLCFKVGKNRGTVHKLMTSMLNVHEKQILSEPPKLRNVAAALFWYKGAMGSGTFTYGPYPDWMAHQTIVGHQSTEANAFDMSVMVQWAFDNNYLDEADIAYQYAKLAPEDSNAVAWLAHNNQARFVRECASMVRFYKKGQMKEMSMSEWIHTRITEVEGEGHWSTIAKFLRYQQVNFIMFLAALKDMLHSVPKRNCILIYGPPNTGKSAFTMSLIRVLRGRVLSFVNSKSQFWLQPMSECKIALIDDVTDPCWLYMDTYLRNGLDGHYVSLDCKHKAPIQTKFPALLLTSNINVHNEITYRYLHSRIKGFEFPNPFPMKADNTPEFELTDQSWKSFFTRLWNQLELSDQEDEGDNGESQRPFQCSARSANEHL.

The short motif at 77-79 (KRK) is the Nuclear localization signal element. 2 positions are modified to phosphoserine; by host: S82 and S90. Residues 89–98 (LSPRLESITL) carry the Nuclear export signal motif. The interval 145–308 (QIGTVDIHYT…TIVGHQSTEA (164 aa)) is DNA-binding region. One can recognise an SF3 helicase domain in the interval 407-557 (VNFIMFLAAL…FPMKADNTPE (151 aa)). An ATP-binding site is contributed by 433-440 (GPPNTGKS). A Glycyl lysine isopeptide (Lys-Gly) (interchain with G-Cter in SUMO) cross-link involves residue K514. The segment at 580-605 (DQEDEGDNGESQRPFQCSARSANEHL) is disordered. A compositionally biased stretch (polar residues) spans 588–605 (GESQRPFQCSARSANEHL).

This sequence belongs to the papillomaviridae E1 protein family. As to quaternary structure, can form hexamers. Interacts with E2 protein; this interaction increases E1 DNA binding specificity. Interacts with host DNA polymerase subunit POLA2. Interacts with host single stranded DNA-binding protein RPA1. Interacts with host TOP1; this interaction stimulates the enzymatic activity of TOP1. Post-translationally, phosphorylated. Sumoylated.

It localises to the host nucleus. It catalyses the reaction Couples ATP hydrolysis with the unwinding of duplex DNA by translocating in the 3'-5' direction.. The catalysed reaction is ATP + H2O = ADP + phosphate + H(+). In terms of biological role, ATP-dependent DNA 3'-5' helicase required for initiation of viral DNA replication. It forms a complex with the viral E2 protein. The E1-E2 complex binds to the replication origin which contains binding sites for both proteins. During the initial step, a dimer of E1 interacts with a dimer of protein E2 leading to a complex that binds the viral origin of replication with high specificity. Then, a second dimer of E1 displaces the E2 dimer in an ATP-dependent manner to form the E1 tetramer. Following this, two E1 monomers are added to each half of the site, which results in the formation of two E1 trimers on the viral ori. Subsequently, two hexamers will be created. The double hexamer acts as a bi-directional helicase machinery and unwinds the viral DNA and then recruits the host DNA polymerase to start replication. This is Replication protein E1 from Homo sapiens (Human).